Reading from the N-terminus, the 458-residue chain is MSAGKIVQIIGAVIDVEFPENAVPKVYDALKVAEGGLTLEVQQQLGGGIVRCIAMGSSDGLKRGLSVSNTGKPISVPVGTKTLGRIMNVLGEPVDEQGPIGAEEEWAIHREAPSYEEQSNSTELLETGIKVIDLICPFAKGGKVGLFGGAGVGKTVNMMELIRNIAIEHSGFSVFAGVGERTREGNDFYHEMTDSNVLDKVSLVYGQMNEPPGNRLRVALTGLTMAEKFRDEGRDVLFFVDNIYRYTLAGTEVSALLGRMPSAVGYQPTLAEEMGVLQERITSTKTGSITSVQAVYVPADDLTDPSPATTFAHLDSTVVLSRNIASLGIYPAVDPLDSTSRQLDPQVVGQEHYDVARGVQGILQRYKELKDIIAILGMDELSEDDKLVVARARKIERFLSQPFFVAEVFTGSPGKYVSLKDTIRGFKGILEGEYDHIPEQAFYMVGSIEEVVEKAKNM.

ATP is bound at residue 148 to 155; that stretch reads GGAGVGKT.

This sequence belongs to the ATPase alpha/beta chains family. F-type ATPases have 2 components, CF(1) - the catalytic core - and CF(0) - the membrane proton channel. CF(1) has five subunits: alpha(3), beta(3), gamma(1), delta(1), epsilon(1). CF(0) has three main subunits: a(1), b(2) and c(9-12). The alpha and beta chains form an alternating ring which encloses part of the gamma chain. CF(1) is attached to CF(0) by a central stalk formed by the gamma and epsilon chains, while a peripheral stalk is formed by the delta and b chains.

It is found in the cell inner membrane. It catalyses the reaction ATP + H2O + 4 H(+)(in) = ADP + phosphate + 5 H(+)(out). Its function is as follows. Produces ATP from ADP in the presence of a proton gradient across the membrane. The catalytic sites are hosted primarily by the beta subunits. The protein is ATP synthase subunit beta of Mannheimia succiniciproducens (strain KCTC 0769BP / MBEL55E).